Reading from the N-terminus, the 119-residue chain is Large ribosomal subunit protein uL24 (119 aa).

The protein belongs to the universal ribosomal protein uL24 family. As to quaternary structure, part of the 50S ribosomal subunit.

In terms of biological role, one of two assembly initiator proteins, it binds directly to the 5'-end of the 23S rRNA, where it nucleates assembly of the 50S subunit. Located at the polypeptide exit tunnel on the outside of the subunit. This chain is Large ribosomal subunit protein uL24, found in Methanosarcina acetivorans (strain ATCC 35395 / DSM 2834 / JCM 12185 / C2A).